The sequence spans 318 residues: tRNA U34 carboxymethyltransferase (318 aa).

Carboxy-S-adenosyl-L-methionine-binding residues include lysine 88, tryptophan 102, lysine 107, glycine 126, methionine 192, tyrosine 196, and arginine 311.

It belongs to the class I-like SAM-binding methyltransferase superfamily. CmoB family. In terms of assembly, homotetramer.

The enzyme catalyses carboxy-S-adenosyl-L-methionine + 5-hydroxyuridine(34) in tRNA = 5-carboxymethoxyuridine(34) in tRNA + S-adenosyl-L-homocysteine + H(+). Catalyzes carboxymethyl transfer from carboxy-S-adenosyl-L-methionine (Cx-SAM) to 5-hydroxyuridine (ho5U) to form 5-carboxymethoxyuridine (cmo5U) at position 34 in tRNAs. This Pseudomonas fluorescens (strain SBW25) protein is tRNA U34 carboxymethyltransferase.